The primary structure comprises 119 residues: NADH-quinone oxidoreductase subunit A (119 aa).

3 helical membrane-spanning segments follow: residues 9–29 (VILFILVGVGVGVAPQVLGFL), 63–83 (LVAILFILFDLEIAFLFPWAV), and 88–108 (IGATGFWAMMIFLGILVVGFV).

The protein belongs to the complex I subunit 3 family. In terms of assembly, NDH-1 is composed of 14 different subunits. Subunits NuoA, H, J, K, L, M, N constitute the membrane sector of the complex.

Its subcellular location is the cell inner membrane. The catalysed reaction is a quinone + NADH + 5 H(+)(in) = a quinol + NAD(+) + 4 H(+)(out). NDH-1 shuttles electrons from NADH, via FMN and iron-sulfur (Fe-S) centers, to quinones in the respiratory chain. The immediate electron acceptor for the enzyme in this species is believed to be ubiquinone. Couples the redox reaction to proton translocation (for every two electrons transferred, four hydrogen ions are translocated across the cytoplasmic membrane), and thus conserves the redox energy in a proton gradient. In Leptothrix cholodnii (strain ATCC 51168 / LMG 8142 / SP-6) (Leptothrix discophora (strain SP-6)), this protein is NADH-quinone oxidoreductase subunit A.